A 209-amino-acid polypeptide reads, in one-letter code: Orotate phosphoribosyltransferase (209 aa).

Residues Arg-96, Lys-100, His-102, and 122 to 130 (EDLISTGGS) contribute to the 5-phospho-alpha-D-ribose 1-diphosphate site. Residue Ser-126 coordinates orotate.

It belongs to the purine/pyrimidine phosphoribosyltransferase family. PyrE subfamily. Homodimer. It depends on Mg(2+) as a cofactor.

The enzyme catalyses orotidine 5'-phosphate + diphosphate = orotate + 5-phospho-alpha-D-ribose 1-diphosphate. Its pathway is pyrimidine metabolism; UMP biosynthesis via de novo pathway; UMP from orotate: step 1/2. In terms of biological role, catalyzes the transfer of a ribosyl phosphate group from 5-phosphoribose 1-diphosphate to orotate, leading to the formation of orotidine monophosphate (OMP). The sequence is that of Orotate phosphoribosyltransferase from Streptococcus pyogenes serotype M5 (strain Manfredo).